The following is an 885-amino-acid chain: MMGSPPAPPARRLGALAVFLLALFLAAPWGVDCGYNVASVAGSKNRLRARLELAGGGGGAAPELGPDVRRLSLTASLETDSRLHVRITDADHPRWEVPQDVIPRPSPDSFLAATRPGGGRVLSTATSDLTFAIHTSPFRFTVTRRSTGDVLFDTTPNLVFKDRYLELTSSLPPPGRASLYGLGEQTKRTFRLQRNDTFTLWNSDIAAGNVDLNLYGSHPFYMDVRSGGGGGGGAAHGVLLLNSNGMDVIYGGSYVTYKVIGGVLDFYFFAGPSPLAVVDQYTQLIGRPAPMPYWSFGFHQCRYGYKNVADLEGVVAGYAKARIPLEVMWTDIDYMDAYKDFTLDPVNFPADRMRPFVDRLHRNGQKFVVIIDPGINVNTTYGTFVRGMKQDIFLKWNGSNYLGVVWPGNVYFPDFLNPRAAEFWAREIAAFRRTLPVDGLWVDMNEISNFVDPPPLNAIDDPPYRINNSGVRRPINNKTVPASAVHYGGVAEYDAHNLFGFLEARATHDALLRDTGRRPFVLSRSTFVGSGRYTAHWTGDNAATWEDLHYSINTMLSFGLFGIPMIGADICGFGGNTTEELCSRWIQLGAFYPFSRDHSAIGTVRRELYLWESVARSARKALGLRYRLLPYLYTLMYEAHTTGAPIARPLFFSYPGDVETYGIDRQFLLGRGVLVSPVLEPGATTVTAYFPAGRWFSLYDFSLAVATKTGKRVTLPAPADTVNVHVAGGNILTLQQPALTSSRVRQSVVHLLVALADDGTATGDLFLDDGESPEMAGPRSRWSQIKFSGATESGGGVVRVRSHVVHDSYAPSRTMAIGKVVLMGLRSAAPPKGFAVYANGVQVNASTAVGGAAGSPEKGALGVAHVSGLTLVVGQEFDLKVVMTY.

The N-terminal stretch at 1–33 is a signal peptide; it reads MMGSPPAPPARRLGALAVFLLALFLAAPWGVDC. N-linked (GlcNAc...) asparagine glycosylation is found at asparagine 195, asparagine 378, and asparagine 397. Catalysis depends on residues aspartate 443 and glutamate 446. Residues asparagine 467 and asparagine 477 are each glycosylated (N-linked (GlcNAc...) asparagine). Aspartate 540 (proton donor) is an active-site residue. N-linked (GlcNAc...) asparagine glycans are attached at residues asparagine 576 and asparagine 844.

The protein belongs to the glycosyl hydrolase 31 family.

The enzyme catalyses Hydrolysis of terminal, non-reducing (1-&gt;4)-linked alpha-D-glucose residues with release of alpha-D-glucose.. The protein is Probable alpha-glucosidase Os06g0675700 of Oryza sativa subsp. japonica (Rice).